The sequence spans 137 residues: Cytochrome c-type biogenesis protein CcmE (137 aa).

Topologically, residues 1 to 8 are cytoplasmic; that stretch reads MQKGAKNR. Residues 9–29 traverse the membrane as a helical; Signal-anchor for type II membrane protein segment; the sequence is LITIIICFCSAVIGVSIILYN. Residues 30–137 lie on the Periplasmic side of the membrane; it reads LEKSIVFFVP…NTVIPAKAGI (108 aa). Heme contacts are provided by H120 and Y124.

Belongs to the CcmE/CycJ family.

The protein localises to the cell inner membrane. Its function is as follows. Heme chaperone required for the biogenesis of c-type cytochromes. Transiently binds heme delivered by CcmC and transfers the heme to apo-cytochromes in a process facilitated by CcmF and CcmH. The polypeptide is Cytochrome c-type biogenesis protein CcmE (Rickettsia bellii (strain OSU 85-389)).